The primary structure comprises 20 residues: Alpha-1B-glycoprotein (20 aa).

The interval A1–P20 is disordered.

As to quaternary structure, interacts with CRISP3. Post-translationally, glycosylated. In terms of tissue distribution, plasma.

The protein resides in the secreted. This chain is Alpha-1B-glycoprotein (A1BG), found in Equus asinus (Donkey).